Here is a 143-residue protein sequence, read N- to C-terminus: Transcription antitermination protein NusB (143 aa).

It belongs to the NusB family.

Functionally, involved in transcription antitermination. Required for transcription of ribosomal RNA (rRNA) genes. Binds specifically to the boxA antiterminator sequence of the ribosomal RNA (rrn) operons. The protein is Transcription antitermination protein NusB of Clostridium botulinum (strain Kyoto / Type A2).